The following is a 229-amino-acid chain: Acetylcholine-binding protein (229 aa).

The signal sequence occupies residues 1–19 (MRRNIFCLACLWIVQACLS). A glycan (N-linked (GlcNAc...) asparagine) is linked at Asn85. The region spanning 114–217 (PEVLTPQLAR…PEAYEDVEVS (104 aa)) is the Ig-like domain. Cys142 and Cys155 are oxidised to a cystine.

In terms of assembly, homopentamer. In terms of processing, N-glycosylated. As to expression, expressed by glial cells.

Its subcellular location is the synaptic cleft. Binds to acetylcholine. Modulates neuronal synaptic transmission. In Lymnaea stagnalis (Great pond snail), this protein is Acetylcholine-binding protein.